A 361-amino-acid polypeptide reads, in one-letter code: Phosphoserine aminotransferase (361 aa).

Residue Arg43 participates in L-glutamate binding. Residues 77–78 (AS), Trp103, Thr153, Asp173, and Gln196 contribute to the pyridoxal 5'-phosphate site. Residue Lys197 is modified to N6-(pyridoxal phosphate)lysine. A pyridoxal 5'-phosphate-binding site is contributed by 238–239 (NT).

This sequence belongs to the class-V pyridoxal-phosphate-dependent aminotransferase family. SerC subfamily. As to quaternary structure, homodimer. The cofactor is pyridoxal 5'-phosphate.

It localises to the cytoplasm. The enzyme catalyses O-phospho-L-serine + 2-oxoglutarate = 3-phosphooxypyruvate + L-glutamate. The catalysed reaction is 4-(phosphooxy)-L-threonine + 2-oxoglutarate = (R)-3-hydroxy-2-oxo-4-phosphooxybutanoate + L-glutamate. It participates in amino-acid biosynthesis; L-serine biosynthesis; L-serine from 3-phospho-D-glycerate: step 2/3. Catalyzes the reversible conversion of 3-phosphohydroxypyruvate to phosphoserine and of 3-hydroxy-2-oxo-4-phosphonooxybutanoate to phosphohydroxythreonine. This chain is Phosphoserine aminotransferase, found in Bacillus anthracis (strain A0248).